A 178-amino-acid chain; its full sequence is Interleukin-10 (178 aa).

The signal sequence occupies residues 1-18 (MHSSALLCYLVFLAGVGA). Intrachain disulfides connect cysteine 30/cysteine 126 and cysteine 80/cysteine 132. A glycan (N-linked (GlcNAc...) asparagine) is linked at asparagine 67. The N-linked (GlcNAc...) asparagine glycan is linked to asparagine 134.

It belongs to the IL-10 family. As to quaternary structure, homodimer. Interacts with IL10RA and IL10RB.

The protein resides in the secreted. In terms of biological role, major immune regulatory cytokine that acts on many cells of the immune system where it has profound anti-inflammatory functions, limiting excessive tissue disruption caused by inflammation. Mechanistically, IL10 binds to its heterotetrameric receptor comprising IL10RA and IL10RB leading to JAK1 and STAT2-mediated phosphorylation of STAT3. In turn, STAT3 translocates to the nucleus where it drives expression of anti-inflammatory mediators. Targets antigen-presenting cells (APCs) such as macrophages and monocytes and inhibits their release of pro-inflammatory cytokines including granulocyte-macrophage colony-stimulating factor /GM-CSF, granulocyte colony-stimulating factor/G-CSF, IL-1 alpha, IL-1 beta, IL-6, IL-8 and TNF-alpha. Also interferes with antigen presentation by reducing the expression of MHC-class II and co-stimulatory molecules, thereby inhibiting their ability to induce T cell activation. In addition, controls the inflammatory response of macrophages by reprogramming essential metabolic pathways including mTOR signaling. In Equus caballus (Horse), this protein is Interleukin-10 (IL10).